Here is a 356-residue protein sequence, read N- to C-terminus: Pyrimidine monooxygenase RutA (356 aa).

FMN is bound by residues 49 to 50, N115, E124, 140 to 141, and S190; these read IK and RY.

It belongs to the NtaA/SnaA/DszA monooxygenase family. RutA subfamily.

It carries out the reaction uracil + FMNH2 + NADH + O2 = (Z)-3-ureidoacrylate + FMN + NAD(+) + H2O + H(+). The catalysed reaction is thymine + FMNH2 + NADH + O2 = (Z)-2-methylureidoacrylate + FMN + NAD(+) + H2O + H(+). Its function is as follows. Catalyzes the pyrimidine ring opening between N-3 and C-4 by an unusual flavin hydroperoxide-catalyzed mechanism, adding oxygen atoms in the process to yield ureidoacrylate peracid, that immediately reacts with FMN forming ureidoacrylate and FMN-N(5)-oxide. The FMN-N(5)-oxide reacts spontaneously with NADH to produce FMN. Requires the flavin reductase RutF to regenerate FMN in vivo. The sequence is that of Pyrimidine monooxygenase RutA from Haliangium ochraceum (strain DSM 14365 / JCM 11303 / SMP-2).